The chain runs to 45 residues: uncharacterized protein (45 aa).

This is an uncharacterized protein from Saccharomyces cerevisiae (strain ATCC 204508 / S288c) (Baker's yeast).